The chain runs to 1208 residues: Spindle pole body protein pcp1 (1208 aa).

Residues 1–17 (MSERDFNTQSPKFKDEN) show a composition bias toward basic and acidic residues. A disordered region spans residues 1–91 (MSERDFNTQS…DKYNGSLGDK (91 aa)). Positions 48–64 (NDKSSFQTPLRNGSYQP) are enriched in polar residues. Coiled coils occupy residues 151-375 (LREQ…KENQ), 387-803 (TDSM…ANIE), 874-1091 (GTET…QSTQ), and 1177-1204 (ERMK…AKAK). Ser906 carries the phosphoserine modification.

Interacts with ccq1.

Its subcellular location is the nucleus. The protein localises to the cytoplasm. The protein resides in the cytoskeleton. It localises to the microtubule organizing center. It is found in the spindle pole body. Functionally, spindle pole body component that binds calmodulin. Overexpression of pcp1 causes the formation of supernumerary SPB-like structures and disrupts both mitotic spindle assembly and chromosome segregation. The chain is Spindle pole body protein pcp1 (pcp1) from Schizosaccharomyces pombe (strain 972 / ATCC 24843) (Fission yeast).